Consider the following 1136-residue polypeptide: Receptor-type guanylate cyclase gcy-4 (1136 aa).

The signal sequence occupies residues 1–21 (MRQLNYYIFISTILTYNLTHG). Residues 22–485 (QGPRPVIRVG…CPLPIFEQYR (464 aa)) lie on the Extracellular side of the membrane. N-linked (GlcNAc...) asparagine glycosylation is found at Asn40, Asn194, Asn252, Asn351, Asn377, Asn386, and Asn438. The chain crosses the membrane as a helical span at residues 486 to 506 (ALVIVAIAVTILILLAIIICM). The Cytoplasmic portion of the chain corresponds to 507-1136 (SSKIRNRRVE…LRREMMRVEV (630 aa)). The region spanning 533–833 (LPMHRRASKS…EDNLMDHVFS (301 aa)) is the Protein kinase domain. Residues 536–565 (HRRASKSSQESETESASETENFTSKSGDTM) are disordered. A Guanylate cyclase domain is found at 891–1021 (TVFFSDLVKF…DTVNTASRME (131 aa)).

This sequence belongs to the adenylyl cyclase class-4/guanylyl cyclase family. As to expression, expression is biased toward ASE right (ASER) sensory neuron.

It is found in the cell membrane. The catalysed reaction is GTP = 3',5'-cyclic GMP + diphosphate. Functionally, guanylate cyclase involved in the production of the second messenger cGMP. Regulates chemotaxis responses toward Br(1-) and I(1-) salt ions in ASE right (ASER) sensory neuron. The sequence is that of Receptor-type guanylate cyclase gcy-4 from Caenorhabditis elegans.